A 121-amino-acid polypeptide reads, in one-letter code: Large ribosomal subunit protein bL12 (121 aa).

The protein belongs to the bacterial ribosomal protein bL12 family. As to quaternary structure, homodimer. Part of the ribosomal stalk of the 50S ribosomal subunit. Forms a multimeric L10(L12)X complex, where L10 forms an elongated spine to which 2 to 4 L12 dimers bind in a sequential fashion. Binds GTP-bound translation factors.

Forms part of the ribosomal stalk which helps the ribosome interact with GTP-bound translation factors. Is thus essential for accurate translation. This Leuconostoc citreum (strain KM20) protein is Large ribosomal subunit protein bL12.